A 203-amino-acid polypeptide reads, in one-letter code: Urease accessory protein UreG (203 aa).

10-17 (GPVGAGKT) contacts GTP.

This sequence belongs to the SIMIBI class G3E GTPase family. UreG subfamily. In terms of assembly, homodimer. UreD, UreF and UreG form a complex that acts as a GTP-hydrolysis-dependent molecular chaperone, activating the urease apoprotein by helping to assemble the nickel containing metallocenter of UreC. The UreE protein probably delivers the nickel.

The protein resides in the cytoplasm. Its function is as follows. Facilitates the functional incorporation of the urease nickel metallocenter. This process requires GTP hydrolysis, probably effectuated by UreG. This is Urease accessory protein UreG from Lachnoclostridium phytofermentans (strain ATCC 700394 / DSM 18823 / ISDg) (Clostridium phytofermentans).